A 365-amino-acid polypeptide reads, in one-letter code: Spermidine/putrescine import ATP-binding protein PotA (365 aa).

Positions 7-237 (LTLADITKRF…PNNLFVASFI (231 aa)) constitute an ABC transporter domain. Position 39 to 46 (39 to 46 (GPSGCGKT)) interacts with ATP.

It belongs to the ABC transporter superfamily. Spermidine/putrescine importer (TC 3.A.1.11.1) family. As to quaternary structure, the complex is composed of two ATP-binding proteins (PotA), two transmembrane proteins (PotB and PotC) and a solute-binding protein (PotD).

The protein localises to the cell inner membrane. The catalysed reaction is ATP + H2O + polyamine-[polyamine-binding protein]Side 1 = ADP + phosphate + polyamineSide 2 + [polyamine-binding protein]Side 1.. In terms of biological role, part of the ABC transporter complex PotABCD involved in spermidine/putrescine import. Responsible for energy coupling to the transport system. The sequence is that of Spermidine/putrescine import ATP-binding protein PotA from Hahella chejuensis (strain KCTC 2396).